A 319-amino-acid chain; its full sequence is Urease accessory protein UreD (319 aa).

The disordered stretch occupies residues 284–319; the sequence is RLSTPQPPREWPLQEEGTFSNERFTKDHQSPSASPH.

It belongs to the UreD family. In terms of assembly, ureD, UreF and UreG form a complex that acts as a GTP-hydrolysis-dependent molecular chaperone, activating the urease apoprotein by helping to assemble the nickel containing metallocenter of UreC. The UreE protein probably delivers the nickel.

It localises to the cytoplasm. Its function is as follows. Required for maturation of urease via the functional incorporation of the urease nickel metallocenter. The polypeptide is Urease accessory protein UreD (Prochlorococcus marinus (strain MIT 9313)).